The sequence spans 291 residues: Nucleotide-binding protein jk1004 (291 aa).

An ATP-binding site is contributed by 16–23; the sequence is GMSGAGRR. 67 to 70 provides a ligand contact to GTP; the sequence is DVRS.

It belongs to the RapZ-like family.

Functionally, displays ATPase and GTPase activities. This chain is Nucleotide-binding protein jk1004, found in Corynebacterium jeikeium (strain K411).